The chain runs to 233 residues: Large ribosomal subunit protein uL1 (233 aa).

This sequence belongs to the universal ribosomal protein uL1 family. Part of the 50S ribosomal subunit.

Binds directly to 23S rRNA. The L1 stalk is quite mobile in the ribosome, and is involved in E site tRNA release. In terms of biological role, protein L1 is also a translational repressor protein, it controls the translation of the L11 operon by binding to its mRNA. The sequence is that of Large ribosomal subunit protein uL1 from Campylobacter concisus (strain 13826).